The sequence spans 127 residues: Ycf91-like protein (127 aa).

The protein belongs to the ycf91 family.

This Nostoc sp. (strain PCC 7120 / SAG 25.82 / UTEX 2576) protein is Ycf91-like protein.